Reading from the N-terminus, the 58-residue chain is Small integral membrane protein 11 (58 aa).

Residues 9-29 (FPLLLYILAAKTLILCLAFAG) form a helical membrane-spanning segment. The stretch at 29–58 (GVKVYQRKRLEAKQQKVEAEKRKQAEKKES) forms a coiled coil.

It is found in the membrane. This Bos taurus (Bovine) protein is Small integral membrane protein 11 (SMIM11).